We begin with the raw amino-acid sequence, 372 residues long: L-selectin (372 aa).

Residues 1-28 form the signal peptide; that stretch reads MIFPWKCQSTQRDLWNIFKLWGWTMLCC. Residues 29–38 constitute a propeptide that is removed on maturation; sequence DFLAHHGTDC. Topologically, residues 39–332 are extracellular; the sequence is WTYHYSEKPM…FSMIKEGDYN (294 aa). The 101-residue stretch at 55–155 folds into the C-type lectin domain; it reads RFCRDNYTDL…ACHKLKAALC (101 aa). Disulfide bonds link Cys-57/Cys-155, Cys-128/Cys-147, Cys-160/Cys-171, Cys-165/Cys-180, Cys-182/Cys-191, Cys-197/Cys-241, Cys-227/Cys-254, Cys-259/Cys-303, and Cys-289/Cys-316. Residues Asn-60 and Asn-104 are each glycosylated (N-linked (GlcNAc...) asparagine). Glu-118, Asn-120, Glu-126, Asn-143, and Asp-144 together coordinate Ca(2+). An EGF-like domain is found at 156 to 192; the sequence is YTASCQPWSCSGHGECVEIINNYTCNCDVGYYGPQCQ. An N-linked (GlcNAc...) asparagine glycan is attached at Asn-177. 2 consecutive Sushi domains span residues 195–256 and 257–318; these read IQCE…TCQV and IQCE…ICQK. Residues Asn-232, Asn-246, and Asn-271 are each glycosylated (N-linked (GlcNAc...) asparagine). Residues 333 to 355 traverse the membrane as a helical segment; that stretch reads PLFIPVAVMVTAFSGLAFIIWLA. Residues 356–372 lie on the Cytoplasmic side of the membrane; it reads RRLKKGKKSKRSMNDPY.

Belongs to the selectin/LECAM family. As to quaternary structure, interaction with SELPLG/PSGL1 and PODXL2 is required for promoting recruitment and rolling of leukocytes. This interaction is dependent on the sialyl Lewis X glycan modification of SELPLG and PODXL2, and tyrosine sulfation modifications of SELPLG. Sulfation on 'Tyr-51' of SELPLG is important for L-selectin binding. N-glycosylated. As to expression, expressed in B-cell lines and T-lymphocytes.

The protein resides in the cell membrane. Functionally, calcium-dependent lectin that mediates cell adhesion by binding to glycoproteins on neighboring cells. Mediates the adherence of lymphocytes to endothelial cells of high endothelial venules in peripheral lymph nodes. Promotes initial tethering and rolling of leukocytes in endothelia. This chain is L-selectin (SELL), found in Homo sapiens (Human).